A 325-amino-acid polypeptide reads, in one-letter code: Thiamine-monophosphate kinase (325 aa).

Mg(2+) is bound by residues aspartate 30, serine 45, threonine 46, and aspartate 47. Histidine 54 provides a ligand contact to substrate. Residues aspartate 75 and aspartate 122 each contribute to the Mg(2+) site. ATP contacts are provided by residues 121 to 122 (GD) and arginine 146. Position 212 (aspartate 212) interacts with Mg(2+). ATP is bound at residue serine 214. Aspartate 215 contacts Mg(2+). Residues glutamate 263 and tyrosine 319 each coordinate substrate.

Belongs to the thiamine-monophosphate kinase family.

The enzyme catalyses thiamine phosphate + ATP = thiamine diphosphate + ADP. It functions in the pathway cofactor biosynthesis; thiamine diphosphate biosynthesis; thiamine diphosphate from thiamine phosphate: step 1/1. With respect to regulation, is markedly activated by the monovalent cations K(+), NH(4)(+), and Rb(+). Is significantly inhibited by ADP, AMP, p-chloromercuribenzoate, N-ethylmaleimide, pyrophosphate, and EDTA. In terms of biological role, catalyzes the ATP-dependent phosphorylation of thiamine-monophosphate (TMP) to form thiamine-pyrophosphate (TPP), the active form of vitamin B1. Cannot use thiamine as substrate. Is highly specific for ATP as phosphate donor. The chain is Thiamine-monophosphate kinase (thiL) from Escherichia coli (strain K12).